A 324-amino-acid polypeptide reads, in one-letter code: Biotin synthase (324 aa).

One can recognise a Radical SAM core domain in the interval 50–278 (HAGPAFTCAI…QADILVAGGR (229 aa)). [4Fe-4S] cluster contacts are provided by C67, C71, and C74. [2Fe-2S] cluster-binding residues include C143 and C203.

This sequence belongs to the radical SAM superfamily. Biotin synthase family. Homodimer. [4Fe-4S] cluster is required as a cofactor. The cofactor is [2Fe-2S] cluster.

The catalysed reaction is (4R,5S)-dethiobiotin + (sulfur carrier)-SH + 2 reduced [2Fe-2S]-[ferredoxin] + 2 S-adenosyl-L-methionine = (sulfur carrier)-H + biotin + 2 5'-deoxyadenosine + 2 L-methionine + 2 oxidized [2Fe-2S]-[ferredoxin]. Its pathway is cofactor biosynthesis; biotin biosynthesis; biotin from 7,8-diaminononanoate: step 2/2. Catalyzes the conversion of dethiobiotin (DTB) to biotin by the insertion of a sulfur atom into dethiobiotin via a radical-based mechanism. The polypeptide is Biotin synthase (Oleidesulfovibrio alaskensis (strain ATCC BAA-1058 / DSM 17464 / G20) (Desulfovibrio alaskensis)).